We begin with the raw amino-acid sequence, 381 residues long: Succinyl-diaminopimelate desuccinylase (381 aa).

His-68 lines the Zn(2+) pocket. The active site involves Asp-70. Zn(2+) is bound at residue Asp-101. Residue Glu-135 is the Proton acceptor of the active site. Zn(2+) is bound by residues Glu-136, Glu-164, and His-350.

It belongs to the peptidase M20A family. DapE subfamily. In terms of assembly, homodimer. The cofactor is Zn(2+). Co(2+) serves as cofactor.

It catalyses the reaction N-succinyl-(2S,6S)-2,6-diaminopimelate + H2O = (2S,6S)-2,6-diaminopimelate + succinate. The protein operates within amino-acid biosynthesis; L-lysine biosynthesis via DAP pathway; LL-2,6-diaminopimelate from (S)-tetrahydrodipicolinate (succinylase route): step 3/3. In terms of biological role, catalyzes the hydrolysis of N-succinyl-L,L-diaminopimelic acid (SDAP), forming succinate and LL-2,6-diaminopimelate (DAP), an intermediate involved in the bacterial biosynthesis of lysine and meso-diaminopimelic acid, an essential component of bacterial cell walls. In Neisseria gonorrhoeae (strain ATCC 700825 / FA 1090), this protein is Succinyl-diaminopimelate desuccinylase.